A 366-amino-acid polypeptide reads, in one-letter code: 5-hydroxytryptamine receptor 1F (366 aa).

Residues 1 to 24 (MDFLNSSDQNLTSEELLNRMPSKI) lie on the Extracellular side of the membrane. N-linked (GlcNAc...) asparagine glycosylation is found at N5 and N10. A helical transmembrane segment spans residues 25–49 (LVSLTLSGLALMTTTINCLVITAII). Residues 50–59 (VTRKLHHPAN) are Cytoplasmic-facing. The chain crosses the membrane as a helical span at residues 60–81 (YLICSLAVTDFLVAVLVMPFSI). At 82-96 (VYIVRESWIMGQGLC) the chain is on the extracellular side. Residues C96 and C172 are joined by a disulfide bond. The chain crosses the membrane as a helical span at residues 97–119 (DLWLSVDIICCTCSILHLSAIAL). Serotonin contacts are provided by D103 and C107. The short motif at 120–122 (DRY) is the DRY motif; important for ligand-induced conformation changes element. Topologically, residues 120-139 (DRYRAITDAVEYARKRTPRH) are cytoplasmic. Residues 140-159 (AGITITTVWVISVFISVPPL) form a helical membrane-spanning segment. Topologically, residues 160–178 (FWRHQGNSRDDQCIIKHDH) are extracellular. A helical membrane pass occupies residues 179–202 (IVSTIYSTFGAFYIPLVLILILYY). Topologically, residues 203 to 291 (KIYRAARTLY…KISGTRERKA (89 aa)) are cytoplasmic. A helical membrane pass occupies residues 292 to 315 (ATTLGLILGAFVICWLPFFVKELV). At 316 to 327 (VNICEKCKISEE) the chain is on the extracellular side. The helical transmembrane segment at 328–350 (MSNFLAWLGYLNSLINPLIYTIF) threads the bilayer. An NPxxY motif; important for ligand-induced conformation changes and signaling motif is present at residues 343-347 (NPLIY). The Cytoplasmic segment spans residues 351–366 (NEDFKKAFQKLVRCRN).

Belongs to the G-protein coupled receptor 1 family.

Its subcellular location is the cell membrane. Its function is as follows. G-protein coupled receptor for 5-hydroxytryptamine (serotonin). Also functions as a receptor for various alkaloids and psychoactive substances. Ligand binding causes a conformation change that triggers signaling via guanine nucleotide-binding proteins (G proteins) and modulates the activity of downstream effectors, such as adenylate cyclase. HTR1F is coupled to G(i)/G(o) G alpha proteins and mediates inhibitory neurotransmission by inhibiting adenylate cyclase activity. The polypeptide is 5-hydroxytryptamine receptor 1F (Htr1f) (Rattus norvegicus (Rat)).